The chain runs to 513 residues: MKIDGNTFICRFNVAILDDGYYLPMDKYLFVYHDQLEYIGQLNPNIIDQAYAALNEEQIEEYNELTTQNGKVNYLLAYDAKVFRKGGVSQHTVYTITPEIASDVNEFVFDIEITLPQEKSGVIATSAHWLHKQGHKASFESRSFLFKAIFNITKLLHIKRSKTILFTSDSRPNLSGNFKYVYDELLRQKVDFDYDIKTVFKENITDRRKWRDKFRLPYLLGKADYIFVDDFHPLIYTVRFRPSQEIIQVWHAVGAFKTVGFSRTGKKGGPFIDSLNHRSYTKAYVSSETDIPFYAEAFGIREENVVPTGVPRTDVLFDEAYATQIKQEMEDELPIIKGKKVILFAPTFRGNGHGTAHYPFFKIDFERLARYCEKHNAVVLFKMHPFVKNRLNISREHRQYFIDVSDHREVNDILFVTDLLISDYSSLIYEYAVFKKPMIFYAFDLEDYITTRDFYEPFESFVPGKIVQSFDALMDALDNEDYEVEKVVPFLDKHFKYQDGRSSERLVKDLFRR.

Belongs to the CDP-glycerol glycerophosphotransferase family.

It is found in the cell membrane. It catalyses the reaction 4-O-[di(2R)-glycerylphospho]-N-acetyl-beta-D-mannosaminyl-(1-&gt;4)-N-acetyl-alpha-D-glucosaminyl di-trans,octa-cis-undecaprenyl diphosphate + n CDP-L-ribitol = 4-O-[(D-ribitylphospho)(n)-di{(2R)-glycerylphospho}]-N-acetyl-beta-D-mannosaminyl-(1-&gt;4)-N-acetyl-alpha-D-glucosaminyl di-trans,octa-cis-undecaprenyl diphosphate + n CMP + n H(+). Its pathway is cell wall biogenesis; poly(ribitol phosphate) teichoic acid biosynthesis. Can catalyze the polymerization of the main chain of the major teichoic acid by sequential transfer of ribitol phosphate units from CDP-ribitol to the second glycerol phosphate attached to the disaccharide linkage unit. This is Teichoic acid ribitol-phosphate polymerase TarK (tarK) from Staphylococcus aureus (strain NCTC 8325 / PS 47).